The primary structure comprises 770 residues: Jhy protein (770 aa).

Disordered regions lie at residues 1–249, 295–438, 493–527, 595–647, and 708–740; these read MNKY…SKQY, TVQN…SFVS, HRHE…PQAE, ESQL…KRDV, and DYAK…KEGG. Positions 57-71 are enriched in basic and acidic residues; it reads SWSDIKDQIQDKDME. The segment covering 72 to 85 has biased composition (acidic residues); sequence PDSLEEDSPSETEE. Residues 112 to 134 show a composition bias toward basic and acidic residues; it reads HQVEDKYSDLRYDPNWKNKREEG. Residues 218-229 are compositionally biased toward low complexity; the sequence is SGLSQYLKSSSS. The segment covering 295–314 has biased composition (basic and acidic residues); that stretch reads TVQNDKEVENTFMDPEDKWH. A compositionally biased stretch (polar residues) spans 340-354; sequence RGQSSDAANGQQPSR. Residues 355–370 are compositionally biased toward basic residues; it reads RTAKARVRKQRKHQKG. Positions 383–398 are enriched in low complexity; the sequence is QNNQNNPFQQPQNQRQ. The span at 410 to 438 shows a compositional bias: polar residues; it reads AQTNASNPNLQDARTLTHNPKVTSDSFVS. Residues 493–509 are compositionally biased toward basic and acidic residues; the sequence is HRHESPSQRAPQSDHHM. Basic residues-rich tracts occupy residues 510–521 and 625–642; these read NTHRSTKTKKPA and GKRH…LKGY.

Expressed in the brain, specifically in hypothalamus, pineal gland, and ependymal cells of the aqueduct of Sylvius, as well as in the choroid plexus of the third ventricle. Expressed in the ependymal cells lining the lateral ventricles (at protein level).

Required for the normal development of cilia in brain ependymal cells lining the ventricular surfaces. This Mus musculus (Mouse) protein is Jhy protein.